Here is a 164-residue protein sequence, read N- to C-terminus: Gastrin-releasing peptide (164 aa).

Positions methionine 1 to alanine 27 are cleaved as a signal peptide. Methionine 54 carries the methionine amide modification. Positions serine 58–serine 164 are excised as a propeptide.

Belongs to the bombesin/neuromedin-B/ranatensin family.

The protein localises to the secreted. It localises to the cytoplasmic vesicle. It is found in the secretory vesicle lumen. Stimulates the release of gastrin and other gastrointestinal hormones. Stimulates pancreatic protein and fluid secretion, and increases acid secretion from the avian proventriculus. This Gallus gallus (Chicken) protein is Gastrin-releasing peptide (GRP).